The following is a 174-amino-acid chain: uncharacterized protein (174 aa).

This is an uncharacterized protein from Methanocaldococcus jannaschii (strain ATCC 43067 / DSM 2661 / JAL-1 / JCM 10045 / NBRC 100440) (Methanococcus jannaschii).